A 565-amino-acid polypeptide reads, in one-letter code: NAD-dependent malic enzyme (565 aa).

The Proton donor role is filled by Tyr-104. Arg-157 lines the NAD(+) pocket. Lys-175 functions as the Proton acceptor in the catalytic mechanism. Residues Glu-246, Asp-247, and Asp-270 each contribute to the a divalent metal cation site. NAD(+) contacts are provided by Asp-270 and Asn-418.

Belongs to the malic enzymes family. In terms of assembly, homotetramer. It depends on Mg(2+) as a cofactor. The cofactor is Mn(2+).

It carries out the reaction (S)-malate + NAD(+) = pyruvate + CO2 + NADH. The catalysed reaction is oxaloacetate + H(+) = pyruvate + CO2. The chain is NAD-dependent malic enzyme from Klebsiella pneumoniae subsp. pneumoniae (strain ATCC 700721 / MGH 78578).